Consider the following 106-residue polypeptide: Iron-sulfur cluster assembly protein CyaY (106 aa).

The protein belongs to the frataxin family.

In terms of biological role, involved in iron-sulfur (Fe-S) cluster assembly. May act as a regulator of Fe-S biogenesis. The chain is Iron-sulfur cluster assembly protein CyaY from Salmonella typhimurium (strain LT2 / SGSC1412 / ATCC 700720).